A 227-amino-acid chain; its full sequence is DNA repair protein RecO (227 aa).

It belongs to the RecO family.

Functionally, involved in DNA repair and RecF pathway recombination. The protein is DNA repair protein RecO of Pseudomonas putida (strain GB-1).